The chain runs to 353 residues: Thiamine-phosphate synthase (353 aa).

The unknown stretch occupies residues 1–128 (MKSMPVAPIA…AASAAAIRYG (128 aa)). Residues 129–353 (LYDLEVTVLQ…TSLQLLEALR (225 aa)) form a thiamine-phosphate synthase region. Residues 185 to 189 (QYRNK) and asparagine 217 contribute to the 4-amino-2-methyl-5-(diphosphooxymethyl)pyrimidine site. Positions 218 and 237 each coordinate Mg(2+). Position 256 (serine 256) interacts with 4-amino-2-methyl-5-(diphosphooxymethyl)pyrimidine. A 2-[(2R,5Z)-2-carboxy-4-methylthiazol-5(2H)-ylidene]ethyl phosphate-binding site is contributed by 282 to 284 (TAT). Lysine 285 contacts 4-amino-2-methyl-5-(diphosphooxymethyl)pyrimidine. Residue glycine 312 coordinates 2-[(2R,5Z)-2-carboxy-4-methylthiazol-5(2H)-ylidene]ethyl phosphate.

Belongs to the thiamine-phosphate synthase family. Requires Mg(2+) as cofactor.

The catalysed reaction is 2-[(2R,5Z)-2-carboxy-4-methylthiazol-5(2H)-ylidene]ethyl phosphate + 4-amino-2-methyl-5-(diphosphooxymethyl)pyrimidine + 2 H(+) = thiamine phosphate + CO2 + diphosphate. It carries out the reaction 2-(2-carboxy-4-methylthiazol-5-yl)ethyl phosphate + 4-amino-2-methyl-5-(diphosphooxymethyl)pyrimidine + 2 H(+) = thiamine phosphate + CO2 + diphosphate. It catalyses the reaction 4-methyl-5-(2-phosphooxyethyl)-thiazole + 4-amino-2-methyl-5-(diphosphooxymethyl)pyrimidine + H(+) = thiamine phosphate + diphosphate. It functions in the pathway cofactor biosynthesis; thiamine diphosphate biosynthesis; thiamine phosphate from 4-amino-2-methyl-5-diphosphomethylpyrimidine and 4-methyl-5-(2-phosphoethyl)-thiazole: step 1/1. Functionally, condenses 4-methyl-5-(beta-hydroxyethyl)thiazole monophosphate (THZ-P) and 2-methyl-4-amino-5-hydroxymethyl pyrimidine pyrophosphate (HMP-PP) to form thiamine monophosphate (TMP). The sequence is that of Thiamine-phosphate synthase from Prochlorococcus marinus (strain MIT 9303).